A 590-amino-acid chain; its full sequence is V-type ATP synthase alpha chain (590 aa).

232–239 (GPFGSGKT) contributes to the ATP binding site.

Belongs to the ATPase alpha/beta chains family.

It catalyses the reaction ATP + H2O + 4 H(+)(in) = ADP + phosphate + 5 H(+)(out). Produces ATP from ADP in the presence of a proton gradient across the membrane. The V-type alpha chain is a catalytic subunit. In Thermoanaerobacter pseudethanolicus (strain ATCC 33223 / 39E) (Clostridium thermohydrosulfuricum), this protein is V-type ATP synthase alpha chain.